The primary structure comprises 488 residues: Acetyl-coenzyme A carboxylase carboxyl transferase subunit beta, chloroplastic (488 aa).

The CoA carboxyltransferase N-terminal domain maps to 224–488; that stretch reads LWIQCDNCYG…FFPLNKNEIK (265 aa). Residues C228, C231, C244, and C247 each contribute to the Zn(2+) site. The C4-type zinc-finger motif lies at 228–247; the sequence is CDNCYGLMYKKVEMNVCEEC.

The protein belongs to the AccD/PCCB family. Acetyl-CoA carboxylase is a heterohexamer composed of biotin carboxyl carrier protein, biotin carboxylase and 2 subunits each of ACCase subunit alpha and ACCase plastid-coded subunit beta (accD). The cofactor is Zn(2+).

Its subcellular location is the plastid. The protein localises to the chloroplast stroma. The enzyme catalyses N(6)-carboxybiotinyl-L-lysyl-[protein] + acetyl-CoA = N(6)-biotinyl-L-lysyl-[protein] + malonyl-CoA. It participates in lipid metabolism; malonyl-CoA biosynthesis; malonyl-CoA from acetyl-CoA: step 1/1. Functionally, component of the acetyl coenzyme A carboxylase (ACC) complex. Biotin carboxylase (BC) catalyzes the carboxylation of biotin on its carrier protein (BCCP) and then the CO(2) group is transferred by the transcarboxylase to acetyl-CoA to form malonyl-CoA. The protein is Acetyl-coenzyme A carboxylase carboxyl transferase subunit beta, chloroplastic of Arabis hirsuta (Hairy rock-cress).